A 364-amino-acid polypeptide reads, in one-letter code: UDP-3-O-acylglucosamine N-acyltransferase (364 aa).

The active-site Proton acceptor is the His-267.

It belongs to the transferase hexapeptide repeat family. LpxD subfamily. Homotrimer.

The enzyme catalyses a UDP-3-O-[(3R)-3-hydroxyacyl]-alpha-D-glucosamine + a (3R)-hydroxyacyl-[ACP] = a UDP-2-N,3-O-bis[(3R)-3-hydroxyacyl]-alpha-D-glucosamine + holo-[ACP] + H(+). The protein operates within bacterial outer membrane biogenesis; LPS lipid A biosynthesis. Catalyzes the N-acylation of UDP-3-O-acylglucosamine using 3-hydroxyacyl-ACP as the acyl donor. Is involved in the biosynthesis of lipid A, a phosphorylated glycolipid that anchors the lipopolysaccharide to the outer membrane of the cell. The chain is UDP-3-O-acylglucosamine N-acyltransferase from Bordetella petrii (strain ATCC BAA-461 / DSM 12804 / CCUG 43448).